The following is a 1637-amino-acid chain: Kinesin-like protein KIF21B (1637 aa).

A Kinesin motor domain is found at 8–370 (CVKVAVRIRP…LKYANRARNI (363 aa)). 87-94 (GQTGAGKT) contributes to the ATP binding site. Coiled coils occupy residues 376-604 (VNQD…EEEG) and 631-824 (NFQA…ALRR). The segment at 400–1099 (MEYKAGKRVI…LQALIYNVQQ (700 aa)) is interaction with TRIM3. Residues 509-533 (ASARSPYSLGASPAAPAFGGSPASS) are compositionally biased toward low complexity. Disordered stretches follow at residues 509–538 (ASAR…EDAS) and 552–628 (KKKE…PEEK). A compositionally biased stretch (acidic residues) spans 578-627 (NSEETDENEAEEEEEERDESGCEEEEGREDEDEDSGSEESLVDSDSDPEE). The residue at position 579 (serine 579) is a Phosphoserine. The residue at position 582 (threonine 582) is a Phosphothreonine. 2 disordered regions span residues 830–865 (SERV…GARS) and 880–906 (FLGD…GASQ). The span at 846-865 (SGAEVSASTTSSEAESGARS) shows a compositional bias: low complexity. Residues 928 to 1016 (MQRMTIVNLE…EETKEELDST (89 aa)) adopt a coiled-coil conformation. Phosphoserine occurs at positions 1149, 1167, and 1215. Residues 1194 to 1217 (RTVSLPTRGSTFPRQSRATETSPL) show a composition bias toward polar residues. Residues 1194 to 1251 (RTVSLPTRGSTFPRQSRATETSPLTRRKSYDRGQPIRSTDVGFTPPSSPPTRPRNDRN) form a disordered region. Threonine 1237 carries the phosphothreonine modification. Residue serine 1241 is modified to Phosphoserine. WD repeat units lie at residues 1306–1343 (GHTK…EIAA), 1346–1384 (GHPN…KCIR), 1410–1448 (QGEH…PVGK), 1451–1493 (GHIG…TGTI), 1502–1539 (PHYD…LIQQ), 1543–1582 (AHKD…PIGE), and 1585–1622 (GHDS…TPCL).

This sequence belongs to the TRAFAC class myosin-kinesin ATPase superfamily. Kinesin family. As to quaternary structure, interacts with TRIM3; the interaction positively affects motility of KIF21B. Interacts with GABARAP and GABA(A) receptor subunits: GABRG2, GABRA1 and GABRA2. May interact with GABA(A) receptor subunits: GABRB2 and GABRB3.

Its subcellular location is the cytoplasm. The protein resides in the cytoskeleton. It localises to the cell projection. The protein localises to the dendrite. It is found in the growth cone. Its subcellular location is the axon. The protein resides in the cytoplasmic vesicle. Its function is as follows. Plus-end directed microtubule-dependent motor protein which displays processive activity. Is involved in regulation of microtubule dynamics, synapse function and neuronal morphology, including dendritic tree branching and spine formation. Plays a role in lerning and memory. Involved in delivery of gamma-aminobutyric acid (GABA(A)) receptor to cell surface. This is Kinesin-like protein KIF21B (KIF21B) from Homo sapiens (Human).